The following is a 131-amino-acid chain: Small ribosomal subunit protein uS8 (131 aa).

Belongs to the universal ribosomal protein uS8 family. Part of the 30S ribosomal subunit. Contacts proteins S5 and S12.

Functionally, one of the primary rRNA binding proteins, it binds directly to 16S rRNA central domain where it helps coordinate assembly of the platform of the 30S subunit. In Burkholderia mallei (strain NCTC 10247), this protein is Small ribosomal subunit protein uS8.